A 556-amino-acid chain; its full sequence is Formate--tetrahydrofolate ligase (556 aa).

Residue 65–72 (TPAGEGKS) participates in ATP binding.

It belongs to the formate--tetrahydrofolate ligase family.

The catalysed reaction is (6S)-5,6,7,8-tetrahydrofolate + formate + ATP = (6R)-10-formyltetrahydrofolate + ADP + phosphate. Its pathway is one-carbon metabolism; tetrahydrofolate interconversion. The sequence is that of Formate--tetrahydrofolate ligase from Streptococcus agalactiae serotype III (strain NEM316).